The sequence spans 94 residues: Dynein light chain, cytoplasmic (94 aa).

It belongs to the dynein light chain family. In terms of assembly, homodimer. Cytoplasmic dynein consists of two catalytic heavy chains (HCs) and a number of non-catalytic subunits which present intermediate chains (ICs), light intermediate chains (LICs) and light chains (LCs). Component of the nuclear pore complex (NPC). The nuclear pore complex constitutes the exclusive means of nucleocytoplasmic transport. NPCs allow the passive diffusion of ions and small molecules and the active, nuclear transport receptor-mediated bidirectional transport of macromolecules such as proteins, RNAs, ribonucleoparticles (RNPs), and ribosomal subunits across the nuclear envelope. Due to its 8-fold rotational symmetry, all subunits are present with 8 copies or multiples thereof.

The protein localises to the cytoplasm. It localises to the cytoskeleton. The protein resides in the nucleus. Its subcellular location is the nuclear pore complex. Acts as one of several non-catalytic accessory components of the cytoplasmic dynein complex that are thought to be involved in linking dynein to cargos and to adapter proteins that regulate dynein function. Cytoplasmic dynein 1 acts as a motor for the intracellular retrograde motility of vesicles and organelles along microtubules. May play a role in changing or maintaining the spatial distribution of cytoskeletal structures. Also a component of the nuclear pore complex. This chain is Dynein light chain, cytoplasmic (nudG), found in Emericella nidulans (strain FGSC A4 / ATCC 38163 / CBS 112.46 / NRRL 194 / M139) (Aspergillus nidulans).